Reading from the N-terminus, the 100-residue chain is ESAT-6-like protein EsxB (100 aa).

This sequence belongs to the WXG100 family. CFP-10 subfamily. Forms a tight 1:1 complex with EsxA.

The protein resides in the secreted. Functionally, a secreted protein that might play a role in virulence. Might serve as a chaperone to prevent uncontrolled membrane lysis by its partner EsxA. This is ESAT-6-like protein EsxB (esxB) from Mycobacterium leprae (strain TN).